A 227-amino-acid chain; its full sequence is Enolase-phosphatase E1 (227 aa).

Asp12 and Glu14 together coordinate Mg(2+). Substrate contacts are provided by residues 118 to 119 (SS) and Lys159. Residue Asp186 coordinates Mg(2+).

This sequence belongs to the HAD-like hydrolase superfamily. MasA/MtnC family. As to quaternary structure, monomer. Mg(2+) is required as a cofactor.

It localises to the cytoplasm. The protein localises to the nucleus. It catalyses the reaction 5-methylsulfanyl-2,3-dioxopentyl phosphate + H2O = 1,2-dihydroxy-5-(methylsulfanyl)pent-1-en-3-one + phosphate. It functions in the pathway amino-acid biosynthesis; L-methionine biosynthesis via salvage pathway; L-methionine from S-methyl-5-thio-alpha-D-ribose 1-phosphate: step 3/6. The protein operates within amino-acid biosynthesis; L-methionine biosynthesis via salvage pathway; L-methionine from S-methyl-5-thio-alpha-D-ribose 1-phosphate: step 4/6. In terms of biological role, bifunctional enzyme that catalyzes the enolization of 2,3-diketo-5-methylthiopentyl-1-phosphate (DK-MTP-1-P) into the intermediate 2-hydroxy-3-keto-5-methylthiopentenyl-1-phosphate (HK-MTPenyl-1-P), which is then dephosphorylated to form the acireductone 1,2-dihydroxy-3-keto-5-methylthiopentene (DHK-MTPene). The polypeptide is Enolase-phosphatase E1 (Vanderwaltozyma polyspora (strain ATCC 22028 / DSM 70294 / BCRC 21397 / CBS 2163 / NBRC 10782 / NRRL Y-8283 / UCD 57-17) (Kluyveromyces polysporus)).